The primary structure comprises 523 residues: Apoptosis inhibitor 5-B (523 aa).

Residues 1 to 360 (MPTVEELYRN…HQLGRKLPDF (360 aa)) are ARM-like and Heat-like helical repeats. Residues 446-523 (VQKTDSGQKR…RGNRSRGRIY (78 aa)) form a disordered region. Positions 454–475 (KRMSDETSSTSPPKKPVVGPKR) match the Nuclear localization signal motif. Residues 502–515 (GFQGGRGRGWGGRG) show a composition bias toward gly residues.

Belongs to the API5 family. As to quaternary structure, monomer.

Its subcellular location is the nucleus. May be an antiapoptotic factor. The protein is Apoptosis inhibitor 5-B (api5-b) of Xenopus laevis (African clawed frog).